We begin with the raw amino-acid sequence, 287 residues long: Eukaryotic translation initiation factor 3 subunit G (287 aa).

Disordered regions lie at residues 1-34 and 159-184; these read MSKL…KDGT and TAGG…YVPP. The RRM domain occupies 207–285; that stretch reads ATLRVTNVSE…LILRVEFAKR (79 aa).

Belongs to the eIF-3 subunit G family. Component of the eukaryotic translation initiation factor 3 (eIF-3) complex.

It is found in the cytoplasm. In terms of biological role, RNA-binding component of the eukaryotic translation initiation factor 3 (eIF-3) complex, which is involved in protein synthesis of a specialized repertoire of mRNAs and, together with other initiation factors, stimulates binding of mRNA and methionyl-tRNAi to the 40S ribosome. The eIF-3 complex specifically targets and initiates translation of a subset of mRNAs involved in cell proliferation. This subunit can bind 18S rRNA. This chain is Eukaryotic translation initiation factor 3 subunit G (tif35), found in Aspergillus oryzae (strain ATCC 42149 / RIB 40) (Yellow koji mold).